Reading from the N-terminus, the 490-residue chain is Probable cytosol aminopeptidase (490 aa).

Residues K258 and D263 each contribute to the Mn(2+) site. The active site involves K270. Mn(2+) is bound by residues D282, D341, and E343. Residue R345 is part of the active site.

The protein belongs to the peptidase M17 family. Mn(2+) is required as a cofactor.

Its subcellular location is the cytoplasm. It catalyses the reaction Release of an N-terminal amino acid, Xaa-|-Yaa-, in which Xaa is preferably Leu, but may be other amino acids including Pro although not Arg or Lys, and Yaa may be Pro. Amino acid amides and methyl esters are also readily hydrolyzed, but rates on arylamides are exceedingly low.. The catalysed reaction is Release of an N-terminal amino acid, preferentially leucine, but not glutamic or aspartic acids.. Its function is as follows. Presumably involved in the processing and regular turnover of intracellular proteins. Catalyzes the removal of unsubstituted N-terminal amino acids from various peptides. This Microcystis aeruginosa (strain NIES-843 / IAM M-2473) protein is Probable cytosol aminopeptidase.